We begin with the raw amino-acid sequence, 321 residues long: uncharacterized protein (321 aa).

N-acetylvaline is present on valine 2. Residues 37 to 63 (SEASRLLTPQTSSNHALSKMQKDDDIR) form a disordered region. A compositionally biased stretch (polar residues) spans 43–52 (LTPQTSSNHA). Residue threonine 44 is modified to Phosphothreonine. Residues serine 49, serine 69, serine 121, serine 126, serine 129, serine 137, and serine 139 each carry the phosphoserine modification. Disordered stretches follow at residues 115–270 (KKQR…YSIS) and 283–321 (ETLE…AQPQ). 3 stretches are compositionally biased toward polar residues: residues 120 to 145 (KSIN…TSTD), 153 to 162 (KYSSSGTPEN), and 178 to 189 (SYGQMIKNNSNR). A Phosphothreonine modification is found at threonine 159. Residues 204-229 (EIDHTAPEKSEKRQERSGRSFDRQKS) are compositionally biased toward basic and acidic residues. Residues 237–253 (LSRSISRGPTKNKTVSP) show a composition bias toward polar residues. Residues serine 238, serine 240, serine 242, and serine 270 each carry the phosphoserine modification. Residues 284–305 (TLEEEQEDAEKEGVLMEDEGNE) are compositionally biased toward acidic residues. The span at 306–315 (EYTKDLEEAA) shows a compositional bias: basic and acidic residues.

The protein resides in the cytoplasm. This is an uncharacterized protein from Saccharomyces cerevisiae (strain ATCC 204508 / S288c) (Baker's yeast).